The chain runs to 154 residues: 17.7 kDa class I heat shock protein (154 aa).

The sHSP domain maps to 40–154; that stretch reads ETSAFANTRI…PDVKSIEISG (115 aa).

It belongs to the small heat shock protein (HSP20) family. Forms oligomeric structures.

It localises to the cytoplasm. The chain is 17.7 kDa class I heat shock protein from Solanum peruvianum (Peruvian tomato).